Reading from the N-terminus, the 353-residue chain is Ribosomal RNA small subunit methyltransferase H (353 aa).

S-adenosyl-L-methionine-binding positions include 50–52 (GGY), D69, F96, D117, and Q124. Positions 276–353 (AAQASRHVPG…PAPQGRGPRR (78 aa)) are disordered.

The protein belongs to the methyltransferase superfamily. RsmH family.

The protein localises to the cytoplasm. The enzyme catalyses cytidine(1402) in 16S rRNA + S-adenosyl-L-methionine = N(4)-methylcytidine(1402) in 16S rRNA + S-adenosyl-L-homocysteine + H(+). Functionally, specifically methylates the N4 position of cytidine in position 1402 (C1402) of 16S rRNA. The sequence is that of Ribosomal RNA small subunit methyltransferase H from Methylorubrum extorquens (strain CM4 / NCIMB 13688) (Methylobacterium extorquens).